A 362-amino-acid polypeptide reads, in one-letter code: MKFIDEARIEVIAGQGGSGSASMRREKFIEFGGPDGGDGGKGGSVWATADRNINTLIDYRYAKTHTAKNGEPGRGADCYGRAGDDIELRMPVGTIISDYETGEPIADLTTHGERLCLAQGGVGGWGNIHFKSSTNRAPRQKTNGKEGERRKLKLELKVLADVGLLGMPNAGKSTLITAVSNARPKIADYPFTTLHPNLGVVRVGNERSFVIADIPGLIEGAAEGAGLGHRFLRHLQRTGVLLHLVDIAPFDENIDPVADAVAIVNELRKYDEALVEKPRWLVLNKVDMIPEEDRKKVVADFIKRFKWKGPVFEISALTGLGCDKLCYALQDYLDSVRRDRDDAEERAADPRYQDQAADKSPD.

One can recognise an Obg domain in the interval 1–159 (MKFIDEARIE…RKLKLELKVL (159 aa)). Residues 129 to 148 (HFKSSTNRAPRQKTNGKEGE) form a disordered region. Residues 130–141 (FKSSTNRAPRQK) are compositionally biased toward polar residues. Residues 160–334 (ADVGLLGMPN…LCYALQDYLD (175 aa)) form the OBG-type G domain. GTP is bound by residues 166–173 (GMPNAGKS), 191–195 (FTTLH), 213–216 (DIPG), 284–287 (NKVD), and 315–317 (SAL). Residues Ser-173 and Thr-193 each contribute to the Mg(2+) site. A disordered region spans residues 340 to 362 (RDDAEERAADPRYQDQAADKSPD).

This sequence belongs to the TRAFAC class OBG-HflX-like GTPase superfamily. OBG GTPase family. As to quaternary structure, monomer. Mg(2+) serves as cofactor.

Its subcellular location is the cytoplasm. An essential GTPase which binds GTP, GDP and possibly (p)ppGpp with moderate affinity, with high nucleotide exchange rates and a fairly low GTP hydrolysis rate. Plays a role in control of the cell cycle, stress response, ribosome biogenesis and in those bacteria that undergo differentiation, in morphogenesis control. This chain is GTPase Obg, found in Polynucleobacter asymbioticus (strain DSM 18221 / CIP 109841 / QLW-P1DMWA-1) (Polynucleobacter necessarius subsp. asymbioticus).